The primary structure comprises 218 residues: Adenylate kinase (218 aa).

Residue 10–15 (GAGKGT) participates in ATP binding. The NMP stretch occupies residues 30–59 (STGDMLRAAINEGTPLGLEAKKVMDAGKLV). AMP-binding positions include threonine 31, arginine 36, 57–59 (KLV), 85–88 (GFPR), and glutamine 92. The interval 122-159 (GRRVHPASGRTYHVLFNPPAKEGVDDITGDPLVQREDD) is LID. ATP-binding positions include arginine 123 and 132 to 133 (TY). Positions 156 and 167 each coordinate AMP. Position 203 (glycine 203) interacts with ATP.

This sequence belongs to the adenylate kinase family. In terms of assembly, monomer.

It is found in the cytoplasm. The enzyme catalyses AMP + ATP = 2 ADP. It functions in the pathway purine metabolism; AMP biosynthesis via salvage pathway; AMP from ADP: step 1/1. Functionally, catalyzes the reversible transfer of the terminal phosphate group between ATP and AMP. Plays an important role in cellular energy homeostasis and in adenine nucleotide metabolism. The polypeptide is Adenylate kinase (Chlorobium phaeobacteroides (strain BS1)).